A 247-amino-acid chain; its full sequence is NCT transcriptional regulatory complex subunit A (247 aa).

The span at 1–12 shows a compositional bias: basic and acidic residues; that stretch reads MTDQDSTYRPRS. Disordered regions lie at residues 1–31, 48–82, and 212–247; these read MTDQ…SPIY, FFAP…SPDM, and VPDQ…DDSD. A compositionally biased stretch (polar residues) spans 13 to 22; sequence PDLSTFQSSI.

It belongs to the NC2 alpha/DRAP1 family. In terms of assembly, forms the NCT transcriptional regulatory complex with nctB and mot1.

Its subcellular location is the nucleus. Part of the NCT transcriptional regulatory complex that acts as a key regulator of ergosterol biosynthesis and the azole exporter cdr1B. The NCT complex binds the promoters of genes linked to azole susceptibility, and especially represses the expression of cdr1B transporter. This chain is NCT transcriptional regulatory complex subunit A, found in Aspergillus fumigatus (strain CBS 144.89 / FGSC A1163 / CEA10) (Neosartorya fumigata).